Here is a 142-residue protein sequence, read N- to C-terminus: MVLSPADKTNVKTAWGKVGAHAGDYGAEALERMFLSFPTTKTYFPHFDLSHGSAQVKGHGKKVADALTNAVAHVDDMPNAQTALSDLHAHKLRVDPVNFKLLSHCLLVTLAAHHPAEFTPAVHASLDKFLASVSTVLTSKYR.

Residues 2–142 (VLSPADKTNV…VSTVLTSKYR (141 aa)) form the Globin domain. An O2-binding site is contributed by His59. His88 serves as a coordination point for heme b.

The protein belongs to the globin family. In terms of assembly, heterotetramer of two alpha chains and two beta chains. As to expression, red blood cells.

Its function is as follows. Involved in oxygen transport from the lung to the various peripheral tissues. In terms of biological role, hemopressin acts as an antagonist peptide of the cannabinoid receptor CNR1. Hemopressin-binding efficiently blocks cannabinoid receptor CNR1 and subsequent signaling. This is Hemoglobin subunit alpha-2 (HBA2) from Hylobates lar (Lar gibbon).